The sequence spans 536 residues: MTLDISREEFVEHAKADRPVVVRTAAELDVDVEPLTAYAALTGRTSDVAANDYTFLLESAEKVASSDPDGAFAPETDDRHARFSFVGYDPRAVVTVTGDESEVEAFDDRYADLVTTDGGDVVDDLRAAMPDVALRNFPAMDRQHLEGGLVGFLSYDAVYDLWLDEVGLDRPDSRFPDAQFVLTTSTVRFDHVEDTVSLVFTPVVRQGEDAGERYGELVAEAERVEAVLSDLSPLSTGGFRREDEVAGPRDEYEDAVERAKEYVLSGDIYQGVISRTRELYGDVDPLGFYEALRAVNPSPYMYLLGYDDLTIVGASPETLVSVAGDHVVSNPIAGTCPRGNSPVEDRRLAGEMLADGKERAEHTMLVDLARNDVRRVAEAGSVRVPEFMNVLKYSHVQHIESTVTGRLAEDKDAFDAARATFPAGTLSGAPKIRAMEIIDELERSPRGPYGGGVGYFDWDGDTDFAIVIRSATVEDEGDRDRITVQAGAGIVADSDPESEYVETEQKMDGVLTALEEIEGEPVDVAERAAGHEEVTR.

L-tryptophan is bound by residues Ser59 and 299–301 (PYM). 334-335 (GT) provides a ligand contact to chorismate. Glu361 is a binding site for Mg(2+). Residues Tyr449, Arg469, 487–489 (GAG), and Gly489 each bind chorismate. Glu502 is a Mg(2+) binding site.

The protein belongs to the anthranilate synthase component I family. As to quaternary structure, tetramer of two components I and two components II. Mg(2+) serves as cofactor.

It catalyses the reaction chorismate + L-glutamine = anthranilate + pyruvate + L-glutamate + H(+). Its pathway is amino-acid biosynthesis; L-tryptophan biosynthesis; L-tryptophan from chorismate: step 1/5. The protein is Anthranilate synthase component 1 2 (trpE2) of Haloarcula marismortui (strain ATCC 43049 / DSM 3752 / JCM 8966 / VKM B-1809) (Halobacterium marismortui).